A 272-amino-acid chain; its full sequence is Ribosomal RNA small subunit methyltransferase A (272 aa).

Positions 18, 20, 45, 66, 91, and 113 each coordinate S-adenosyl-L-methionine.

Belongs to the class I-like SAM-binding methyltransferase superfamily. rRNA adenine N(6)-methyltransferase family. RsmA subfamily.

The protein resides in the cytoplasm. It catalyses the reaction adenosine(1518)/adenosine(1519) in 16S rRNA + 4 S-adenosyl-L-methionine = N(6)-dimethyladenosine(1518)/N(6)-dimethyladenosine(1519) in 16S rRNA + 4 S-adenosyl-L-homocysteine + 4 H(+). Its function is as follows. Specifically dimethylates two adjacent adenosines (A1518 and A1519) in the loop of a conserved hairpin near the 3'-end of 16S rRNA in the 30S particle. May play a critical role in biogenesis of 30S subunits. This chain is Ribosomal RNA small subunit methyltransferase A, found in Yersinia pestis bv. Antiqua (strain Antiqua).